Here is a 369-residue protein sequence, read N- to C-terminus: N-methyltransferase imqF (369 aa).

This sequence belongs to the methyltransferase superfamily.

The protein operates within secondary metabolite biosynthesis. N-methyltransferase; part of the gene cluster that mediates the biosynthesis of imizoquins A to D, tripeptide-derived alkaloids that serve a protective role against oxidative stress that are essential for normal germination. ImqB is a canonical three-module NRPS that assembles the tripeptide backbone of the imizoquins via condensation of Trp, Tyr, and Leu-derived precursors. N-methylation by imqF and phenol oxidation by imqC, followed by cyclization via the FAD-dependent oxidase imqH carry out the three-step transformation of L-tyrosine into tetrahydroisoquinoline. Importantly, this sequence requires the presence of a free amine in the tyrosine moiety, indicating that isoquinoline formation occurs prior to peptide bond formation. The imidazolidin-4-one ring of imizoquins could form following additional oxidation of the methyl-derived bridgehead carbon by imqH. Lastly, O-methylation by imqG and leucine hydroxylation by imqE complete biosynthesis of the imizoquins. In Aspergillus flavus (strain ATCC 200026 / FGSC A1120 / IAM 13836 / NRRL 3357 / JCM 12722 / SRRC 167), this protein is N-methyltransferase imqF.